A 208-amino-acid chain; its full sequence is Sec-independent protein translocase protein TatB (208 aa).

The helical transmembrane segment at 1–21 (MFDIGVGELTLIAVVALVVLG) threads the bilayer. A disordered region spans residues 188-208 (DAGTPAASMPSAPAKIQEKQP).

This sequence belongs to the TatB family. The Tat system comprises two distinct complexes: a TatABC complex, containing multiple copies of TatA, TatB and TatC subunits, and a separate TatA complex, containing only TatA subunits. Substrates initially bind to the TatABC complex, which probably triggers association of the separate TatA complex to form the active translocon.

The protein resides in the cell inner membrane. Its function is as follows. Part of the twin-arginine translocation (Tat) system that transports large folded proteins containing a characteristic twin-arginine motif in their signal peptide across membranes. Together with TatC, TatB is part of a receptor directly interacting with Tat signal peptides. TatB may form an oligomeric binding site that transiently accommodates folded Tat precursor proteins before their translocation. The sequence is that of Sec-independent protein translocase protein TatB from Xanthomonas axonopodis pv. citri (strain 306).